A 160-amino-acid polypeptide reads, in one-letter code: Competence protein ComGD (160 aa).

Residues 30-50 traverse the membrane as a helical segment; the sequence is AFTMLESLLVLGLVSILALGL.

The transformation pili are flexible filaments, consisting mainly of the major pilin ComGC and smaller amounts of the minor pilins, including at least ComGD, ComGF and ComGG, and perhaps ComGE. Interacts with ComGE. Interacts with ComGF. Interacts with ComGG.

The protein resides in the cell membrane. It localises to the cell surface. The protein localises to the fimbrium. Required for formation of the type IV-like pilus (T4P) that plays a role in transformation. Transformation pili are dynamically extended and retracted, perhaps thereby promoting DNA uptake and transformation. Involved in transformation. Required for DNA binding. The sequence is that of Competence protein ComGD from Streptococcus pneumoniae (strain ATCC BAA-255 / R6).